The chain runs to 1041 residues: Importin-9 (1041 aa).

Residue Ala-2 is modified to N-acetylalanine. The 77-residue stretch at 43–119 (AEEQIKVLEV…RELLPNGLRE (77 aa)) folds into the Importin N-terminal domain. The tract at residues 936-967 (QATPAEWSQDDSNDMWEDQEEEEEEEEDGLAG) is disordered. Acidic residues predominate over residues 943–964 (SQDDSNDMWEDQEEEEEEEEDG).

It belongs to the importin beta family. Interacts with histones H2A, H2B, H3 and H4. The binding is coupled to RanGTP cycles. Interacts with AKIRIN2; promoting association with pre-assembled proteasomes. Associates with pre-assembled proteasomes; interaction is indirect and mediated via interaction with AKIRIN2. Interacts with PPP2R1A and PPP2R1B.

Its subcellular location is the cytoplasm. It is found in the nucleus. In terms of biological role, nuclear transport receptor that mediates nuclear import of proteins, such as histones, proteasome and actin. Serves as receptor for nuclear localization signals (NLS) in cargo substrates. Is thought to mediate docking of the importin/substrate complex to the nuclear pore complex (NPC) through binding to nucleoporin and the complex is subsequently translocated through the pore by an energy requiring, Ran-dependent mechanism. At the nucleoplasmic side of the NPC, Ran binds to the importin, the importin/substrate complex dissociates and importin is re-exported from the nucleus to the cytoplasm where GTP hydrolysis releases Ran. The directionality of nuclear import is thought to be conferred by an asymmetric distribution of the GTP- and GDP-bound forms of Ran between the cytoplasm and nucleus. Mediates the import of pre-assembled proteasomes into the nucleus; AKIRIN2 acts as a molecular bridge between IPO9 and the proteasome complex. Mediates the nuclear import of histones H2A, H2B, H4 and H4. In addition to nuclear import, also acts as a chaperone for histones by preventing inappropriate non-nucleosomal interactions. Mediates the nuclear import of actin. This is Importin-9 from Homo sapiens (Human).